Reading from the N-terminus, the 940-residue chain is Isoleucine--tRNA ligase (940 aa).

The 'HIGH' region signature appears at 58 to 68 (PYANGDIHIGH). Glu-564 serves as a coordination point for L-isoleucyl-5'-AMP. A 'KMSKS' region motif is present at residues 605 to 609 (KMSKS). ATP is bound at residue Lys-608. Residues Cys-903, Cys-906, Cys-923, and Cys-926 each contribute to the Zn(2+) site.

The protein belongs to the class-I aminoacyl-tRNA synthetase family. IleS type 1 subfamily. As to quaternary structure, monomer. Zn(2+) serves as cofactor.

Its subcellular location is the cytoplasm. The catalysed reaction is tRNA(Ile) + L-isoleucine + ATP = L-isoleucyl-tRNA(Ile) + AMP + diphosphate. Functionally, catalyzes the attachment of isoleucine to tRNA(Ile). As IleRS can inadvertently accommodate and process structurally similar amino acids such as valine, to avoid such errors it has two additional distinct tRNA(Ile)-dependent editing activities. One activity is designated as 'pretransfer' editing and involves the hydrolysis of activated Val-AMP. The other activity is designated 'posttransfer' editing and involves deacylation of mischarged Val-tRNA(Ile). The sequence is that of Isoleucine--tRNA ligase from Shewanella pealeana (strain ATCC 700345 / ANG-SQ1).